Reading from the N-terminus, the 413-residue chain is Cardiolipin synthase B (413 aa).

2 consecutive PLD phosphodiesterase domains span residues 108-135 and 285-312; these read IFRR…SAEH and RRRP…DPLS. Catalysis depends on residues His113, Lys115, Asp120, His290, Lys292, and Asp297. Residues 388–413 form a disordered region; the sequence is AQVPPPAQPEMETQDRVDPENTGVKP.

This sequence belongs to the phospholipase D family. Cardiolipin synthase subfamily. ClsB sub-subfamily.

The protein resides in the cell membrane. The enzyme catalyses 2 a 1,2-diacyl-sn-glycero-3-phospho-(1'-sn-glycerol) = a cardiolipin + glycerol. Its function is as follows. Catalyzes the phosphatidyl group transfer from one phosphatidylglycerol molecule to another to form cardiolipin (CL) (diphosphatidylglycerol) and glycerol. The sequence is that of Cardiolipin synthase B from Salmonella typhimurium (strain LT2 / SGSC1412 / ATCC 700720).